The chain runs to 145 residues: UPF0260 protein VS_0923 (145 aa).

It belongs to the UPF0260 family.

The protein is UPF0260 protein VS_0923 of Vibrio atlanticus (strain LGP32) (Vibrio splendidus (strain Mel32)).